The sequence spans 600 residues: Elongation factor 4 (600 aa).

The tr-type G domain maps to 4 to 186; that stretch reads SKIRNFSIIA…AIVDKIPPPS (183 aa). GTP is bound by residues 16 to 21 and 133 to 136; these read DHGKST and NKID.

This sequence belongs to the TRAFAC class translation factor GTPase superfamily. Classic translation factor GTPase family. LepA subfamily.

The protein resides in the cell membrane. The catalysed reaction is GTP + H2O = GDP + phosphate + H(+). Required for accurate and efficient protein synthesis under certain stress conditions. May act as a fidelity factor of the translation reaction, by catalyzing a one-codon backward translocation of tRNAs on improperly translocated ribosomes. Back-translocation proceeds from a post-translocation (POST) complex to a pre-translocation (PRE) complex, thus giving elongation factor G a second chance to translocate the tRNAs correctly. Binds to ribosomes in a GTP-dependent manner. This Mycoplasma capricolum subsp. capricolum (strain California kid / ATCC 27343 / NCTC 10154) protein is Elongation factor 4.